Reading from the N-terminus, the 201-residue chain is Small ribosomal subunit protein uS4 (201 aa).

The region spanning 93 to 153 (QRLDNIVYRL…EKSKNLVIIK (61 aa)) is the S4 RNA-binding domain.

It belongs to the universal ribosomal protein uS4 family. Part of the 30S ribosomal subunit. Contacts protein S5. The interaction surface between S4 and S5 is involved in control of translational fidelity.

Functionally, one of the primary rRNA binding proteins, it binds directly to 16S rRNA where it nucleates assembly of the body of the 30S subunit. In terms of biological role, with S5 and S12 plays an important role in translational accuracy. In Latilactobacillus sakei subsp. sakei (strain 23K) (Lactobacillus sakei subsp. sakei), this protein is Small ribosomal subunit protein uS4.